The sequence spans 188 residues: FUN14 domain-containing protein 1B (188 aa).

A helical transmembrane segment spans residues 21-41 (VVNIDGNIFSIYVCFFVCFFF). Residues 52–55 (YEVL) carry the YXXL motif. 3 helical membrane passes run 82-102 (YSVATQIVIGGVSGWCAGFLF), 109-129 (AATAVGGGFLLLQIASHGGYI), and 167-187 (FFKKNIVVSGGFVGGFLIGLA).

The protein belongs to the FUN14 family.

Its subcellular location is the mitochondrion outer membrane. In terms of biological role, acts as an activator of hypoxia-induced mitophagy, an important mechanism for mitochondrial quality control. The chain is FUN14 domain-containing protein 1B (fundc1-b) from Xenopus laevis (African clawed frog).